Consider the following 693-residue polypeptide: ATP-dependent DNA helicase RecG (693 aa).

The segment at 48–146 (THLYPIGELL…GDLSTPELQE (99 aa)) is wedge domain. The region spanning 283–448 (DMALDVPMMR…AYADLDTSVI (166 aa)) is the Helicase ATP-binding domain. 296–303 (GDVGSGKT) contributes to the ATP binding site. The DEAH box signature appears at 397 to 400 (DEQH). One can recognise a Helicase C-terminal domain in the interval 482 to 628 (EGRQAYWVCT…GFVIAQKDLE (147 aa)).

It belongs to the helicase family. RecG subfamily. In terms of assembly, monomer.

The enzyme catalyses Couples ATP hydrolysis with the unwinding of duplex DNA by translocating in the 3'-5' direction.. It carries out the reaction ATP + H2O = ADP + phosphate + H(+). Functionally, plays a critical role in recombination and DNA repair. Helps process Holliday junction intermediates to mature products by catalyzing branch migration. Has replication fork regression activity, unwinds stalled or blocked replication forks to make a HJ that can be resolved. Has a DNA unwinding activity characteristic of a DNA helicase with 3'-5' polarity. In terms of biological role, plays a role in recovery after DNA ADP-ribosylation. In Escherichia coli O127:H6 (strain E2348/69 / EPEC), this protein is ATP-dependent DNA helicase RecG.